A 477-amino-acid chain; its full sequence is Zinc finger C3HC-type protein 1-like (477 aa).

The segment at 95 to 149 (CAKYGWCNIECDMLKCSSCNAYLCASLQPILDFSKYKQRCVELQEALRKAHEKFC) adopts a C3HC-type zinc-finger fold. The disordered stretch occupies residues 287 to 392 (SLSAPGTPVS…SSSSDTSPRS (106 aa)). Over residues 354 to 363 (SMGQGENTGL) the composition is skewed to polar residues. Over residues 370-379 (SPHRRAKRPR) the composition is skewed to basic residues. Positions 382-392 (SSSSSDTSPRS) are enriched in low complexity.

In terms of processing, phosphorylated. May also be weakly phosphorylated on Tyr residues.

The protein localises to the nucleus. It localises to the nucleus envelope. Functionally, required for proper positioning of a substantial amount of TPR at the nuclear basket (NB) through interaction with TPR. This Xenopus laevis (African clawed frog) protein is Zinc finger C3HC-type protein 1-like (zc3hc1).